We begin with the raw amino-acid sequence, 347 residues long: NADH-quinone oxidoreductase subunit H 1 (347 aa).

9 helical membrane-spanning segments follow: residues 13–33, 50–70, 82–102, 115–135, 161–181, 198–218, 263–283, 286–306, and 321–341; these read IIMI…IAYV, PNVV…KFVF, AVFL…WAVV, VGIL…IMGG, IGFV…TDIV, FLDW…ISAL, CALT…IWIL, VPGI…FAMV, and LGWK…AFVL.

This sequence belongs to the complex I subunit 1 family. NDH-1 is composed of 14 different subunits. Subunits NuoA, H, J, K, L, M, N constitute the membrane sector of the complex.

Its subcellular location is the cell inner membrane. It carries out the reaction a quinone + NADH + 5 H(+)(in) = a quinol + NAD(+) + 4 H(+)(out). In terms of biological role, NDH-1 shuttles electrons from NADH, via FMN and iron-sulfur (Fe-S) centers, to quinones in the respiratory chain. The immediate electron acceptor for the enzyme in this species is believed to be ubiquinone. Couples the redox reaction to proton translocation (for every two electrons transferred, four hydrogen ions are translocated across the cytoplasmic membrane), and thus conserves the redox energy in a proton gradient. This subunit may bind ubiquinone. This chain is NADH-quinone oxidoreductase subunit H 1, found in Rhizobium etli (strain ATCC 51251 / DSM 11541 / JCM 21823 / NBRC 15573 / CFN 42).